A 290-amino-acid polypeptide reads, in one-letter code: MNFIIATRRSKLAQVQTEIIIDLLNKKHDIECEKLLIETVGDKILEVSLDKIGGKGLFVKDIEVAMLEQRADAAVHSMKDVPYEMPKGFEIIAIPEREDVRDAFISLDNIKFKDLREGAKIGTSSRRRAAQLKLLRSDLDIVPIRGNVQTRIEKIKKENLDGIILAVAGLKRVNLDHLITDYFDTKEMVPAIGQGALGIEVMEEHPKKELFKDLDHYNSKICVLAERAFMRELDGDCHSTIGAYASIKDNIMHIIGIFERKNKIIKKEITGTKDQYEKLGIALAEHILKD.

Position 237 is an S-(dipyrrolylmethanemethyl)cysteine (Cys-237).

Belongs to the HMBS family. In terms of assembly, monomer. It depends on dipyrromethane as a cofactor.

The catalysed reaction is 4 porphobilinogen + H2O = hydroxymethylbilane + 4 NH4(+). It participates in porphyrin-containing compound metabolism; protoporphyrin-IX biosynthesis; coproporphyrinogen-III from 5-aminolevulinate: step 2/4. In terms of biological role, tetrapolymerization of the monopyrrole PBG into the hydroxymethylbilane pre-uroporphyrinogen in several discrete steps. This Clostridium botulinum (strain 657 / Type Ba4) protein is Porphobilinogen deaminase.